A 351-amino-acid polypeptide reads, in one-letter code: UDP-3-O-acylglucosamine N-acyltransferase (351 aa).

Histidine 240 serves as the catalytic Proton acceptor.

Belongs to the transferase hexapeptide repeat family. LpxD subfamily. As to quaternary structure, homotrimer.

It catalyses the reaction a UDP-3-O-[(3R)-3-hydroxyacyl]-alpha-D-glucosamine + a (3R)-hydroxyacyl-[ACP] = a UDP-2-N,3-O-bis[(3R)-3-hydroxyacyl]-alpha-D-glucosamine + holo-[ACP] + H(+). It functions in the pathway bacterial outer membrane biogenesis; LPS lipid A biosynthesis. Catalyzes the N-acylation of UDP-3-O-acylglucosamine using 3-hydroxyacyl-ACP as the acyl donor. Is involved in the biosynthesis of lipid A, a phosphorylated glycolipid that anchors the lipopolysaccharide to the outer membrane of the cell. The protein is UDP-3-O-acylglucosamine N-acyltransferase of Pseudomonas entomophila (strain L48).